Here is a 384-residue protein sequence, read N- to C-terminus: Urea transporter 1 (384 aa).

The segment at 1 to 23 (MDDNPTAVKLDQGGNQAPQGQGR) is disordered. The next 5 helical transmembrane spans lie at 61 to 81 (ISQVVFVSNPISGILILVGLL), 85 to 105 (PWCALNGCVGTVVSTLTALLL), 111 to 131 (AITAGLQGYNATLVGILMAIY), 138 to 158 (FWWLLFPVSAMSMTCPIFSSA), and 169 to 189 (PVFTLPFNMALSMYLSATGHF). Asn206 carries an N-linked (GlcNAc...) asparagine glycan. The next 3 helical transmembrane spans lie at 237–257 (GGIFLGAILLSSPLMCLHAAI), 279–299 (GLWGFNSSLACIAIGGMFMAL), and 327–347 (VVGLPSCTWPFCLATLLFLLL).

The protein belongs to the urea transporter family. As to quaternary structure, homotrimer; each subunit contains a pore through which urea permeates. Identified in a complex with STOM.

It localises to the cell membrane. It is found in the basolateral cell membrane. It carries out the reaction urea(in) = urea(out). Mediates the transport of urea driven by a concentration gradient across the cell membranes of erythrocytes and the renal inner medullary collecting duct which is critical to the urinary concentrating mechanism. Facilitates water transport in erythrocytes. This chain is Urea transporter 1 (SLC14A1), found in Ovis aries (Sheep).